The following is a 67-amino-acid chain: Large ribosomal subunit protein bL35 (67 aa).

Positions 1–20 are disordered; that stretch reads MPKLKTKSGAKKRFVPKKSG.

This sequence belongs to the bacterial ribosomal protein bL35 family.

The chain is Large ribosomal subunit protein bL35 from Anaeromyxobacter dehalogenans (strain 2CP-1 / ATCC BAA-258).